The primary structure comprises 110 residues: uncharacterized protein (110 aa).

The signal sequence occupies residues 1-23 (MKRITINIITMFIAAAVISLTGT).

This is an uncharacterized protein from Bacillus subtilis (strain 168).